Here is a 292-residue protein sequence, read N- to C-terminus: 2-(5''-triphosphoribosyl)-3'-dephosphocoenzyme-A synthase (292 aa).

It belongs to the CitG/MdcB family.

The catalysed reaction is 3'-dephospho-CoA + ATP = 2'-(5''-triphospho-alpha-D-ribosyl)-3'-dephospho-CoA + adenine. Catalyzes the formation of 2-(5''-triphosphoribosyl)-3'-dephosphocoenzyme-A, the precursor of the prosthetic group of the holo-acyl carrier protein (gamma chain) of citrate lyase, from ATP and dephospho-CoA. This is 2-(5''-triphosphoribosyl)-3'-dephosphocoenzyme-A synthase from Escherichia coli O139:H28 (strain E24377A / ETEC).